A 457-amino-acid chain; its full sequence is tRNA-2-methylthio-N(6)-dimethylallyladenosine synthase (457 aa).

Residues 3 to 120 enclose the MTTase N-terminal domain; sequence KKVYVKTFGC…LPQMIDARRE (118 aa). The [4Fe-4S] cluster site is built by Cys-12, Cys-49, Cys-83, Cys-157, Cys-161, and Cys-164. A Radical SAM core domain is found at 143–377; that stretch reads RVEGPSAFVS…QATIEENVAR (235 aa). Residues 380 to 447 enclose the TRAM domain; that stretch reads QSMVGKVERI…PHSLRGELVL (68 aa).

This sequence belongs to the methylthiotransferase family. MiaB subfamily. As to quaternary structure, monomer. Requires [4Fe-4S] cluster as cofactor.

The protein localises to the cytoplasm. The enzyme catalyses N(6)-dimethylallyladenosine(37) in tRNA + (sulfur carrier)-SH + AH2 + 2 S-adenosyl-L-methionine = 2-methylsulfanyl-N(6)-dimethylallyladenosine(37) in tRNA + (sulfur carrier)-H + 5'-deoxyadenosine + L-methionine + A + S-adenosyl-L-homocysteine + 2 H(+). Functionally, catalyzes the methylthiolation of N6-(dimethylallyl)adenosine (i(6)A), leading to the formation of 2-methylthio-N6-(dimethylallyl)adenosine (ms(2)i(6)A) at position 37 in tRNAs that read codons beginning with uridine. The protein is tRNA-2-methylthio-N(6)-dimethylallyladenosine synthase of Burkholderia lata (strain ATCC 17760 / DSM 23089 / LMG 22485 / NCIMB 9086 / R18194 / 383).